The chain runs to 214 residues: Large ribosomal subunit protein bL25 (214 aa).

The disordered stretch occupies residues 193 to 214 (PRAAAEEEDTGAEGDVEAADAE). A compositionally biased stretch (acidic residues) spans 198 to 214 (EEEDTGAEGDVEAADAE).

The protein belongs to the bacterial ribosomal protein bL25 family. CTC subfamily. Part of the 50S ribosomal subunit; part of the 5S rRNA/L5/L18/L25 subcomplex. Contacts the 5S rRNA. Binds to the 5S rRNA independently of L5 and L18.

In terms of biological role, this is one of the proteins that binds to the 5S RNA in the ribosome where it forms part of the central protuberance. This Nitrosococcus oceani (strain ATCC 19707 / BCRC 17464 / JCM 30415 / NCIMB 11848 / C-107) protein is Large ribosomal subunit protein bL25.